Here is a 358-residue protein sequence, read N- to C-terminus: Protein-glutamate methylesterase/protein-glutamine glutaminase 1 (358 aa).

The region spanning 8-125 is the Response regulatory domain; it reads RVLIVDDSAV…ARGLEGYAEE (118 aa). 4-aspartylphosphate is present on aspartate 59. The 196-residue stretch at 157–352 folds into the CheB-type methylesterase domain; that stretch reads PVPGSALRFR…LERVAERLIA (196 aa). Catalysis depends on residues serine 177, histidine 203, and aspartate 299.

The protein belongs to the CheB family. In terms of processing, phosphorylated by CheA. Phosphorylation of the N-terminal regulatory domain activates the methylesterase activity.

The protein localises to the cytoplasm. It catalyses the reaction [protein]-L-glutamate 5-O-methyl ester + H2O = L-glutamyl-[protein] + methanol + H(+). The enzyme catalyses L-glutaminyl-[protein] + H2O = L-glutamyl-[protein] + NH4(+). In terms of biological role, involved in chemotaxis. Part of a chemotaxis signal transduction system that modulates chemotaxis in response to various stimuli. Catalyzes the demethylation of specific methylglutamate residues introduced into the chemoreceptors (methyl-accepting chemotaxis proteins or MCP) by CheR. Also mediates the irreversible deamidation of specific glutamine residues to glutamic acid. The polypeptide is Protein-glutamate methylesterase/protein-glutamine glutaminase 1 (Xanthomonas campestris pv. campestris (strain ATCC 33913 / DSM 3586 / NCPPB 528 / LMG 568 / P 25)).